A 79-amino-acid chain; its full sequence is D-alanyl carrier protein (79 aa).

The region spanning Met1 to Arg77 is the Carrier domain. O-(pantetheine 4'-phosphoryl)serine is present on Ser35.

It belongs to the DltC family. 4'-phosphopantetheine is transferred from CoA to a specific serine of apo-DCP.

Its subcellular location is the cytoplasm. It participates in cell wall biogenesis; lipoteichoic acid biosynthesis. In terms of biological role, carrier protein involved in the D-alanylation of lipoteichoic acid (LTA). The loading of thioester-linked D-alanine onto DltC is catalyzed by D-alanine--D-alanyl carrier protein ligase DltA. The DltC-carried D-alanyl group is further transferred to cell membrane phosphatidylglycerol (PG) by forming an ester bond, probably catalyzed by DltD. D-alanylation of LTA plays an important role in modulating the properties of the cell wall in Gram-positive bacteria, influencing the net charge of the cell wall. The chain is D-alanyl carrier protein from Lactobacillus johnsonii (strain CNCM I-12250 / La1 / NCC 533).